The sequence spans 110 residues: MHGPKPTVQEIVLELCPYNEIQPVDLVCHEQLGDSDDEIDEPDHAVNHHQHLLLARRDEQQRHRIQCLCCKCNKALQLVVEASRDNLRTLQQLFMDSLNFVCPWCATETQ.

Positions 1-47 (MHGPKPTVQEIVLELCPYNEIQPVDLVCHEQLGDSDDEIDEPDHAVN) are E7 terminal domain. The LXCXE motif; interaction with host RB1 and TMEM173/STING signature appears at 26-30 (LVCHE). The segment at 69–105 (CCKCNKALQLVVEASRDNLRTLQQLFMDSLNFVCPWC) is a zinc-finger region. The Nuclear export signal signature appears at 87 to 95 (LRTLQQLFM).

This sequence belongs to the papillomaviridae E7 protein family. As to quaternary structure, homodimer. Homooligomer. Interacts with host RB1; this interaction induces dissociation of RB1-E2F1 complex thereby disrupting RB1 activity. Interacts with host EP300; this interaction represses EP300 transcriptional activity. Interacts with protein E2; this interaction inhibits E7 oncogenic activity. Interacts with host TMEM173/STING; this interaction impairs the ability of TMEM173/STING to sense cytosolic DNA and promote the production of type I interferon (IFN-alpha and IFN-beta). Post-translationally, highly phosphorylated.

The protein localises to the host cytoplasm. It is found in the host nucleus. Plays a role in viral genome replication by driving entry of quiescent cells into the cell cycle. Stimulation of progression from G1 to S phase allows the virus to efficiently use the cellular DNA replicating machinery to achieve viral genome replication. E7 protein has both transforming and trans-activating activities. Induces the disassembly of the E2F1 transcription factor from RB1, with subsequent transcriptional activation of E2F1-regulated S-phase genes. Interferes with host histone deacetylation mediated by HDAC1 and HDAC2, leading to transcription activation. Also plays a role in the inhibition of both antiviral and antiproliferative functions of host interferon alpha. Interaction with host TMEM173/STING impairs the ability of TMEM173/STING to sense cytosolic DNA and promote the production of type I interferon (IFN-alpha and IFN-beta). This is Protein E7 from Human papillomavirus 68.